Reading from the N-terminus, the 538-residue chain is Frizzled-4 (538 aa).

Residues 1–37 form the signal peptide; that stretch reads MAWQGTGPSVRGMPGGVRLRLGLLLLQLLLLQRPALG. The Extracellular portion of the chain corresponds to 38–213; sequence FGDEEERRCD…KCGYDAGLYS (176 aa). The region spanning 41-162 is the FZ domain; the sequence is EEERRCDPIR…NDHNHMCMEG (122 aa). Disulfide bonds link Cys46–Cys107, Cys54–Cys100, Cys91–Cys129, Cys118–Cys159, Cys122–Cys146, Cys182–Cys201, Cys205–Cys283, and Cys303–Cys378. Asn60 carries N-linked (GlcNAc...) asparagine glycosylation. N-linked (GlcNAc...) asparagine glycosylation is present at Asn145. The helical transmembrane segment at 214-244 threads the bilayer; sequence RSAKEFTDIWMAVWASLCFISTTFTVLTFLI. The Cytoplasmic portion of the chain corresponds to 245-250; sequence DSSRFS. Residues 251–276 traverse the membrane as a helical segment; it reads YPERPIIFLSMCYNIYSIAYIVRLTV. Topologically, residues 277–300 are extracellular; that stretch reads GRERISCDFEEAAEPVLIQEGLKN. A helical membrane pass occupies residues 301-334; that stretch reads TGCAIIFLLMYFFGMASSIWWVILTLTWFLAAGL. Residues 335–337 are Cytoplasmic-facing; that stretch reads KWG. The chain crosses the membrane as a helical span at residues 338 to 366; the sequence is HEAIEMHSSYFHIAAWAIPAVKTIVILIM. Residues 367–384 lie on the Extracellular side of the membrane; the sequence is RLVDADELTGLCYVGNQS. The N-linked (GlcNAc...) asparagine glycan is linked to Asn382. A helical transmembrane segment spans residues 385 to 419; sequence LDALTGFVVAPLFTYLVIGTLFIAAGLVALFKIRS. The Cytoplasmic segment spans residues 420–432; that stretch reads NLQKDGTKTDKLE. The helical transmembrane segment at 433–461 threads the bilayer; it reads RLMVKIGVFSVLYTVPATCVIACYFYEIS. At 462 to 474 the chain is on the extracellular side; that stretch reads NWALFRYSADDSN. The chain crosses the membrane as a helical span at residues 475 to 496; it reads MAVEMLKIFMSLLVGITSGMWI. Residues 497–538 lie on the Cytoplasmic side of the membrane; sequence WSAKTLHTWQKCSNRLVNSGKVKREKRGNGWVKPGKGNETVV. The Lys-Thr-X-X-X-Trp motif, mediates interaction with the PDZ domain of Dvl family members motif lies at 500-505; sequence KTLHTW. The PDZ-binding motif lies at 536–538; sequence TVV.

This sequence belongs to the G-protein coupled receptor Fz/Smo family. As to quaternary structure, interacts with MAGI3 and NDP. Component of a complex, at least composed of TSPAN12, FZD4 and norrin (NDP). Interacts (via FZ domain) with TSKU; TSKU competes with WNT2B for binding to FZD4, inhibiting Wnt signaling and repressing peripheral eye development. Interacts with glypican GPC3. In terms of processing, ubiquitinated by ZNRF3, leading to its degradation by the proteasome.

Its subcellular location is the cell membrane. Receptor for Wnt proteins. Most of frizzled receptors are coupled to the beta-catenin (CTNNB1) canonical signaling pathway, which leads to the activation of disheveled proteins, inhibition of GSK-3 kinase, nuclear accumulation of beta-catenin (CTNNB1) and activation of Wnt target genes. Plays a critical role in retinal vascularization by acting as a receptor for Wnt proteins and norrin (NDP). In retina, it can be both activated by Wnt protein-binding, but also by a Wnt-independent signaling via binding of norrin (NDP), promoting in both cases beta-catenin (CTNNB1) accumulation and stimulation of LEF/TCF-mediated transcriptional programs. A second signaling pathway involving PKC and calcium fluxes has been seen for some family members, but it is not yet clear if it represents a distinct pathway or if it can be integrated in the canonical pathway, as PKC seems to be required for Wnt-mediated inactivation of GSK-3 kinase. Both pathways seem to involve interactions with G-proteins. May be involved in transduction and intercellular transmission of polarity information during tissue morphogenesis and/or in differentiated tissues. The protein is Frizzled-4 (Fzd4) of Rattus norvegicus (Rat).